The following is a 193-amino-acid chain: SCO1 protein homolog (193 aa).

An N-terminal signal peptide occupies residues 1-18 (MKVIKGLTAGLIFLFLCA). A lipid anchor (N-palmitoyl cysteine) is attached at Cys19. A lipid anchor (S-diacylglycerol cysteine) is attached at Cys19. Positions 26–191 (DPLNYEVEPF…IISDVKSAST (166 aa)) constitute a Thioredoxin domain. Cu cation-binding residues include Cys64, Cys68, and His154.

It belongs to the SCO1/2 family. In terms of assembly, monomer.

It is found in the cell membrane. Functionally, necessary for insertion of copper into the active site of cytochrome c oxidase. May play a role in copper homeostasis or redox signaling. In Bacillus subtilis (strain 168), this protein is SCO1 protein homolog (ypmQ).